The primary structure comprises 450 residues: Asparagine--tRNA ligase (450 aa).

This sequence belongs to the class-II aminoacyl-tRNA synthetase family. Homodimer.

The protein resides in the cytoplasm. It carries out the reaction tRNA(Asn) + L-asparagine + ATP = L-asparaginyl-tRNA(Asn) + AMP + diphosphate + H(+). The sequence is that of Asparagine--tRNA ligase from Enterococcus faecalis (strain ATCC 700802 / V583).